We begin with the raw amino-acid sequence, 277 residues long: Shikimate dehydrogenase (NADP(+)) (277 aa).

Residues 17–19 (SRS) and Thr64 each bind shikimate. Lys68 acts as the Proton acceptor in catalysis. Shikimate is bound by residues Asn88 and Asp103. Residues 128 to 132 (GAGGS) and Leu217 each bind NADP(+). Tyr219 contacts shikimate. Residue Gly240 participates in NADP(+) binding.

The protein belongs to the shikimate dehydrogenase family. Homodimer.

The catalysed reaction is shikimate + NADP(+) = 3-dehydroshikimate + NADPH + H(+). Its pathway is metabolic intermediate biosynthesis; chorismate biosynthesis; chorismate from D-erythrose 4-phosphate and phosphoenolpyruvate: step 4/7. In terms of biological role, involved in the biosynthesis of the chorismate, which leads to the biosynthesis of aromatic amino acids. Catalyzes the reversible NADPH linked reduction of 3-dehydroshikimate (DHSA) to yield shikimate (SA). The polypeptide is Shikimate dehydrogenase (NADP(+)) (Afipia carboxidovorans (strain ATCC 49405 / DSM 1227 / KCTC 32145 / OM5) (Oligotropha carboxidovorans)).